The primary structure comprises 277 residues: 4-hydroxy-tetrahydrodipicolinate reductase (277 aa).

NAD(+) contacts are provided by residues 11-16 and 110-112; these read GALGRM and GTT. Histidine 166 functions as the Proton donor/acceptor in the catalytic mechanism. Histidine 167 lines the (S)-2,3,4,5-tetrahydrodipicolinate pocket. The active-site Proton donor is the lysine 170. Residue 176 to 177 coordinates (S)-2,3,4,5-tetrahydrodipicolinate; that stretch reads GT.

It belongs to the DapB family.

Its subcellular location is the cytoplasm. It catalyses the reaction (S)-2,3,4,5-tetrahydrodipicolinate + NAD(+) + H2O = (2S,4S)-4-hydroxy-2,3,4,5-tetrahydrodipicolinate + NADH + H(+). The catalysed reaction is (S)-2,3,4,5-tetrahydrodipicolinate + NADP(+) + H2O = (2S,4S)-4-hydroxy-2,3,4,5-tetrahydrodipicolinate + NADPH + H(+). Its pathway is amino-acid biosynthesis; L-lysine biosynthesis via DAP pathway; (S)-tetrahydrodipicolinate from L-aspartate: step 4/4. Its function is as follows. Catalyzes the conversion of 4-hydroxy-tetrahydrodipicolinate (HTPA) to tetrahydrodipicolinate. This chain is 4-hydroxy-tetrahydrodipicolinate reductase, found in Synechococcus sp. (strain CC9902).